We begin with the raw amino-acid sequence, 94 residues long: Co-chaperonin GroES (94 aa).

This sequence belongs to the GroES chaperonin family. In terms of assembly, heptamer of 7 subunits arranged in a ring. Interacts with the chaperonin GroEL.

The protein resides in the cytoplasm. Together with the chaperonin GroEL, plays an essential role in assisting protein folding. The GroEL-GroES system forms a nano-cage that allows encapsulation of the non-native substrate proteins and provides a physical environment optimized to promote and accelerate protein folding. GroES binds to the apical surface of the GroEL ring, thereby capping the opening of the GroEL channel. The chain is Co-chaperonin GroES from Clostridium botulinum (strain Alaska E43 / Type E3).